Here is a 451-residue protein sequence, read N- to C-terminus: Trigger factor (451 aa).

The PPIase FKBP-type domain occupies 173–258 (GDRVTVDFVG…LKKVEWAHLP (86 aa)).

It belongs to the FKBP-type PPIase family. Tig subfamily.

The protein localises to the cytoplasm. The enzyme catalyses [protein]-peptidylproline (omega=180) = [protein]-peptidylproline (omega=0). Involved in protein export. Acts as a chaperone by maintaining the newly synthesized protein in an open conformation. Functions as a peptidyl-prolyl cis-trans isomerase. In Cupriavidus taiwanensis (strain DSM 17343 / BCRC 17206 / CCUG 44338 / CIP 107171 / LMG 19424 / R1) (Ralstonia taiwanensis (strain LMG 19424)), this protein is Trigger factor.